The chain runs to 281 residues: Kinetochore-associated protein NSL1 homolog (281 aa).

Residue Ser-4 is modified to Phosphoserine. A Phosphothreonine modification is found at Thr-244.

Component of the MIS12 complex composed of MIS12, DSN1, NSL1/DC8 and PMF1. Interacts with KNL1.

Its subcellular location is the nucleus. It localises to the chromosome. It is found in the centromere. The protein resides in the kinetochore. Part of the MIS12 complex which is required for normal chromosome alignment and segregation and kinetochore formation during mitosis. The polypeptide is Kinetochore-associated protein NSL1 homolog (NSL1) (Homo sapiens (Human)).